The sequence spans 30 residues: Thylakoid lumenal 17 kDa protein (30 aa).

It is found in the plastid. Its subcellular location is the chloroplast thylakoid lumen. The protein is Thylakoid lumenal 17 kDa protein of Spinacia oleracea (Spinach).